A 509-amino-acid chain; its full sequence is Probable xyloglucan galactosyltransferase GT12 (509 aa).

Topologically, residues 1 to 3 are cytoplasmic; it reads MMK. The helical; Signal-anchor for type II membrane protein transmembrane segment at 4–24 threads the bilayer; the sequence is PVPKLWVVISSAFVFCLLVLF. The Lumenal segment spans residues 25–509; sequence QINKSDLIEA…KLEIIHEKTA (485 aa). N-linked (GlcNAc...) asparagine glycans are attached at residues N27, N59, N65, N169, N170, N195, N257, and N416.

It belongs to the glycosyltransferase 47 family. Expressed in pollen grains.

The protein resides in the golgi apparatus membrane. Its function is as follows. Functions in xyloglucan synthesis by adding side chains to the xylosylated glucan backbone. Involved in the galactosylation of hemicellulose xyloglucan. This Arabidopsis thaliana (Mouse-ear cress) protein is Probable xyloglucan galactosyltransferase GT12.